Here is a 937-residue protein sequence, read N- to C-terminus: FNIP repeat-containing protein DDB_G0271996 (937 aa).

Positions 1–12 are enriched in polar residues; sequence MQQPISIQQPVV. A disordered region spans residues 1–60; the sequence is MQQPISIQQPVVNNINNSPNNQANINNNTTNNTNNNNNNNNTTNNIANNNNSNNINNNNE. Residues 13-60 show a composition bias toward low complexity; that stretch reads NNINNSPNNQANINNNTTNNTNNNNNNNNTTNNIANNNNSNNINNNNE. FNIP repeat units follow at residues 307-350, 354-394, 396-439, and 598-640; these read FNQP…LGQR, PIPI…TLDN, FNQP…FHQN, and YNHQ…RVKS. A coiled-coil region spans residues 677-769; that stretch reads VEQQAQYAQQ…EEEDTNNHQH (93 aa). Residues 719–729 are compositionally biased toward low complexity; it reads KQQQQQQQDNE. Disordered regions lie at residues 719–767, 794–823, and 910–937; these read KQQQ…TNNH, SNNSNNYNYNNNSNNNNNNNSNEEDDEEED, and QNQNNNNYNNNNNNNNNNNNNKKKNVKK. The span at 751–763 shows a compositional bias: acidic residues; the sequence is LEEEQENEEEEED. 2 stretches are compositionally biased toward low complexity: residues 794 to 814 and 910 to 929; these read SNNSNNYNYNNNSNNNNNNNS and QNQNNNNYNNNNNNNNNNNN. Residues 902-937 are a coiled coil; it reads ICNNINQNQNQNNNNYNNNNNNNNNNNNNKKKNVKK.

This is FNIP repeat-containing protein DDB_G0271996 from Dictyostelium discoideum (Social amoeba).